A 198-amino-acid polypeptide reads, in one-letter code: PEP-dependent dihydroxyacetone kinase 1, ADP-binding subunit DhaL (198 aa).

The DhaL domain maps to 6–194 (DWALRWLNDF…SALLFHAMLQ (189 aa)). 3 residues coordinate Mg(2+): Asp30, Asp35, and Asp37. ADP is bound by residues 38–41 (HGIN), 79–80 (AS), Gly120, Met129, Arg166, and 179–181 (DPG).

In terms of assembly, homodimer. The dihydroxyacetone kinase complex is composed of a homodimer of DhaM, a homodimer of DhaK and the subunit DhaL. Mg(2+) is required as a cofactor.

The protein resides in the cytoplasm. It carries out the reaction dihydroxyacetone + phosphoenolpyruvate = dihydroxyacetone phosphate + pyruvate. Its pathway is polyol metabolism; glycerol degradation. ADP-binding subunit of the dihydroxyacetone kinase, which is responsible for the phosphoenolpyruvate (PEP)-dependent phosphorylation of dihydroxyacetone. DhaL-ADP is converted to DhaL-ATP via a phosphoryl group transfer from DhaM and transmits it to dihydroxyacetone binds to DhaK. In Listeria innocua serovar 6a (strain ATCC BAA-680 / CLIP 11262), this protein is PEP-dependent dihydroxyacetone kinase 1, ADP-binding subunit DhaL.